Here is a 511-residue protein sequence, read N- to C-terminus: Peroxisomal N(1)-acetyl-spermine/spermidine oxidase (511 aa).

At methionine 1 the chain carries N-acetylmethionine. FAD contacts are provided by residues alanine 24, glutamate 45, arginine 53, and 69 to 70 (HW). Residues histidine 72 and valine 194 each coordinate substrate. Valine 247 contributes to the FAD binding site. Asparagine 320 contacts substrate. Residues glutamate 472 and 481–482 (TT) each bind FAD. Positions 509 to 511 (PRL) match the Microbody targeting signal motif.

This sequence belongs to the flavin monoamine oxidase family. Monomer. The cofactor is FAD. Widely expressed. Not detected in spleen. Expressed at lower level in neoplastic tissues.

The protein localises to the peroxisome. It is found in the cytoplasm. It carries out the reaction N(1)-acetylspermine + O2 + H2O = 3-acetamidopropanal + spermidine + H2O2. The enzyme catalyses N(1)-acetylspermidine + O2 + H2O = 3-acetamidopropanal + putrescine + H2O2. The catalysed reaction is N(1),N(12)-diacetylspermine + O2 + H2O = 3-acetamidopropanal + N(1)-acetylspermidine + H2O2. It participates in amine and polyamine metabolism; spermine metabolism. In terms of biological role, flavoenzyme which catalyzes the oxidation of N(1)-acetylspermine to spermidine and is thus involved in the polyamine back-conversion. Can also oxidize N(1)-acetylspermidine to putrescine. Substrate specificity: N(1)-acetylspermine = N(1)-acetylspermidine &gt; N(1),N(12)-diacylspermine &gt;&gt; spermine. Does not oxidize spermidine. Plays an important role in the regulation of polyamine intracellular concentration and has the potential to act as a determinant of cellular sensitivity to the antitumor polyamine analogs. The chain is Peroxisomal N(1)-acetyl-spermine/spermidine oxidase (PAOX) from Homo sapiens (Human).